Here is a 63-residue protein sequence, read N- to C-terminus: Small ribosomal subunit protein eS31 (63 aa).

Cys-31, Cys-34, Cys-50, and Cys-53 together coordinate Zn(2+). The C4-type zinc finger occupies 31 to 53 (CPRCGSIMAHHMKPVERWACGKC).

This sequence belongs to the eukaryotic ribosomal protein eS31 family. In terms of assembly, part of the 30S ribosomal subunit. The cofactor is Zn(2+).

The protein is Small ribosomal subunit protein eS31 of Sulfurisphaera tokodaii (strain DSM 16993 / JCM 10545 / NBRC 100140 / 7) (Sulfolobus tokodaii).